The primary structure comprises 337 residues: Phosphate acyltransferase (337 aa).

It belongs to the PlsX family. As to quaternary structure, homodimer. Probably interacts with PlsY.

The protein localises to the cytoplasm. It carries out the reaction a fatty acyl-[ACP] + phosphate = an acyl phosphate + holo-[ACP]. Its pathway is lipid metabolism; phospholipid metabolism. In terms of biological role, catalyzes the reversible formation of acyl-phosphate (acyl-PO(4)) from acyl-[acyl-carrier-protein] (acyl-ACP). This enzyme utilizes acyl-ACP as fatty acyl donor, but not acyl-CoA. This Listeria innocua serovar 6a (strain ATCC BAA-680 / CLIP 11262) protein is Phosphate acyltransferase.